The sequence spans 506 residues: Zinc finger and SCAN domain containing protein 4D (506 aa).

Residues 37 to 119 (SAQLNFSPSN…RFMESLTDEC (83 aa)) enclose the SCAN box domain. Residues 238-264 (SQGNSSHHVDFRSAPTPADVPMEEQPK) form a disordered region. C2H2-type zinc fingers lie at residues 395–417 (FKCE…QRTH), 424–446 (LLCV…EIIH), 452–474 (FKCS…EMIH), and 480–503 (YVCS…RNYH).

In terms of tissue distribution, highly expressed at the 2-cell stage but its expression is rapidly turned off.

It localises to the nucleus. Its subcellular location is the chromosome. It is found in the telomere. In terms of biological role, transcription factor required to regulate early development. Binds telomeres and plays a key role in genomic stability by regulating telomere elongation. Acts as an activator of spontaneous telomere sister chromatid exchange (T-SCE) and telomere elongation. In Mus musculus (Mouse), this protein is Zinc finger and SCAN domain containing protein 4D (Zscan4d).